We begin with the raw amino-acid sequence, 1099 residues long: Carbamoyl phosphate synthase large chain (1099 aa).

The tract at residues 1–402 (MPKREDIKRI…ALGKALRSLE (402 aa)) is carboxyphosphate synthetic domain. ATP is bound by residues Arg-129, Arg-169, Gly-175, Gly-176, Glu-208, Val-210, Glu-215, Gly-241, Ile-242, His-243, Gln-285, and Glu-299. An ATP-grasp 1 domain is found at 133-328 (KETMEKAGLE…IAKVAALLAV (196 aa)). The Mg(2+) site is built by Gln-285, Glu-299, and Asn-301. Positions 285, 299, and 301 each coordinate Mn(2+). Positions 403 to 541 (LDAAPKLDLE…STYNGVENEA (139 aa)) are oligomerization domain. Residues 542–944 (VPSDREKIMI…AFAKAQIAAG (403 aa)) are carbamoyl phosphate synthetic domain. The ATP-grasp 2 domain occupies 666-857 (AKLLKQIGLK…VARIAAKIMV (192 aa)). ATP-binding residues include Arg-702, Lys-741, Leu-743, Glu-748, Gly-773, Val-774, His-775, Ser-776, Gln-816, and Glu-828. Mg(2+) contacts are provided by Gln-816, Glu-828, and Asn-830. Mn(2+) is bound by residues Gln-816, Glu-828, and Asn-830. An MGS-like domain is found at 945–1099 (NPLPTTGAIL…VRRLTDTWKM (155 aa)). Residues 945–1099 (NPLPTTGAIL…VRRLTDTWKM (155 aa)) form an allosteric domain region.

Belongs to the CarB family. As to quaternary structure, composed of two chains; the small (or glutamine) chain promotes the hydrolysis of glutamine to ammonia, which is used by the large (or ammonia) chain to synthesize carbamoyl phosphate. Tetramer of heterodimers (alpha,beta)4. Mg(2+) is required as a cofactor. Mn(2+) serves as cofactor.

The catalysed reaction is hydrogencarbonate + L-glutamine + 2 ATP + H2O = carbamoyl phosphate + L-glutamate + 2 ADP + phosphate + 2 H(+). It carries out the reaction hydrogencarbonate + NH4(+) + 2 ATP = carbamoyl phosphate + 2 ADP + phosphate + 2 H(+). It functions in the pathway amino-acid biosynthesis; L-arginine biosynthesis; carbamoyl phosphate from bicarbonate: step 1/1. The protein operates within pyrimidine metabolism; UMP biosynthesis via de novo pathway; (S)-dihydroorotate from bicarbonate: step 1/3. Large subunit of the glutamine-dependent carbamoyl phosphate synthetase (CPSase). CPSase catalyzes the formation of carbamoyl phosphate from the ammonia moiety of glutamine, carbonate, and phosphate donated by ATP, constituting the first step of 2 biosynthetic pathways, one leading to arginine and/or urea and the other to pyrimidine nucleotides. The large subunit (synthetase) binds the substrates ammonia (free or transferred from glutamine from the small subunit), hydrogencarbonate and ATP and carries out an ATP-coupled ligase reaction, activating hydrogencarbonate by forming carboxy phosphate which reacts with ammonia to form carbamoyl phosphate. This Thermotoga maritima (strain ATCC 43589 / DSM 3109 / JCM 10099 / NBRC 100826 / MSB8) protein is Carbamoyl phosphate synthase large chain.